We begin with the raw amino-acid sequence, 548 residues long: Chaperonin GroEL (548 aa).

ATP contacts are provided by residues 29–32, Lys50, 86–90, Gly414, 478–480, and Asp494; these read TMGP, DGTTT, and NAA.

It belongs to the chaperonin (HSP60) family. In terms of assembly, forms a cylinder of 14 subunits composed of two heptameric rings stacked back-to-back. Interacts with the co-chaperonin GroES.

The protein localises to the cytoplasm. It catalyses the reaction ATP + H2O + a folded polypeptide = ADP + phosphate + an unfolded polypeptide.. Its function is as follows. Together with its co-chaperonin GroES, plays an essential role in assisting protein folding. The GroEL-GroES system forms a nano-cage that allows encapsulation of the non-native substrate proteins and provides a physical environment optimized to promote and accelerate protein folding. The polypeptide is Chaperonin GroEL (Legionella pneumophila (strain Corby)).